The chain runs to 31 residues: Cytochrome b6-f complex subunit 6 (31 aa).

The chain crosses the membrane as a helical span at residues 4–24 (IISYFGLLLATLTFTIVLFVG).

The protein belongs to the PetL family. In terms of assembly, the 4 large subunits of the cytochrome b6-f complex are cytochrome b6, subunit IV (17 kDa polypeptide, PetD), cytochrome f and the Rieske protein, while the 4 small subunits are PetG, PetL, PetM and PetN. The complex functions as a dimer.

It is found in the plastid. The protein resides in the chloroplast thylakoid membrane. Component of the cytochrome b6-f complex, which mediates electron transfer between photosystem II (PSII) and photosystem I (PSI), cyclic electron flow around PSI, and state transitions. PetL is important for photoautotrophic growth as well as for electron transfer efficiency and stability of the cytochrome b6-f complex. The sequence is that of Cytochrome b6-f complex subunit 6 from Staurastrum punctulatum (Green alga).